The primary structure comprises 346 residues: Selenoprotein V (346 aa).

Disordered stretches follow at residues 1-40 (MNNQ…VRTR) and 151-206 (LDPP…PGPT). Over residues 151 to 162 (LDPPPEPAPELP) the composition is skewed to pro residues. The segment at residues 270 to 273 (CGLU) is a cross-link (cysteinyl-selenocysteine (Cys-Sec); redox-active). U273 is a non-standard amino acid (selenocysteine).

Belongs to the SelWTH family. Truncated SELENOV proteins produced by failed UGA/Sec decoding are ubiquitinated by the CRL2(APPBP2) complex, which recognizes the glycine (Gly) at the C-terminus of truncated SELENOV proteins. As to expression, testis specific.

May be involved in a redox-related process. The sequence is that of Selenoprotein V from Homo sapiens (Human).